A 444-amino-acid polypeptide reads, in one-letter code: UDP-N-acetylmuramate--L-alanine ligase (444 aa).

110-116 (GAHGKTS) provides a ligand contact to ATP.

Belongs to the MurCDEF family. Post-translationally, phosphorylated by StkP in vitro. Dephosphorylated by PhpP in vitro.

It is found in the cytoplasm. The catalysed reaction is UDP-N-acetyl-alpha-D-muramate + L-alanine + ATP = UDP-N-acetyl-alpha-D-muramoyl-L-alanine + ADP + phosphate + H(+). It functions in the pathway cell wall biogenesis; peptidoglycan biosynthesis. Its function is as follows. Cell wall formation. The sequence is that of UDP-N-acetylmuramate--L-alanine ligase from Streptococcus pneumoniae serotype 4 (strain ATCC BAA-334 / TIGR4).